A 478-amino-acid polypeptide reads, in one-letter code: Zinc finger protein 410 (478 aa).

Disordered regions lie at residues 84 to 113 and 187 to 214; these read PDGEETRAQTVQKSPEFLTTPESPSLLQDL and NAKTGSNGENVHLGSGDGQPKDSGPLPQ. Over residues 103–113 the composition is skewed to polar residues; that stretch reads TPESPSLLQDL. 5 C2H2-type zinc fingers span residues 219–243, 249–273, 279–303, 309–333, and 339–362; these read LKCTVEGCDRTFVWPAHFKYHLKTH, FICPAEGCGKSFYVLQRLKVHMRTH, FMCHESGCGKQFTTAGNLKNHRRIH, FLCEAQGCGRSFAEYSSLRKHLVVH, and HQCQVCGKTFSQSGSRNVHMRKHH. Cysteine 221, cysteine 226, histidine 239, histidine 243, cysteine 251, cysteine 256, histidine 269, histidine 273, cysteine 281, cysteine 286, histidine 299, histidine 303, cysteine 311, cysteine 316, histidine 329, histidine 333, cysteine 341, cysteine 344, histidine 357, and histidine 361 together coordinate Zn(2+).

Interacts with CDKN2A/p14ARF. In terms of processing, O-glycosylated. O-GlcNAcylation may occur in response to increasing glucose levels and affect transcription factor activity. Sumoylated. Sumoylation increases its half-life, possibly by blocking ubiquitin-mediated degradation.

It localises to the nucleus. The protein localises to the chromosome. Transcription factor that binds to the sequence motif 5'-CATCCCATAATA-3', and is specifically required to silence expression of fetal hemoglobin in adult erythroid cells. Prevents expression of fetal hemoglobin genes HBG1 and HBG2 through CHD4: acts as a direct transcriptional activator of CHD4, a central component of the NuRD complex that represses transcription of fetal hemoglobin genes HBG1 and HBG2 in erythroid cells. May also activate transcription of matrix-remodeling genes such as MMP1 during fibroblast senescence. May activate transcription of the gap junction gene GJC1, perhaps in response to increasing glucose. However, recent studies suggest that ZNF410 is dedicated to regulate expression of a single gene: CHD4. This chain is Zinc finger protein 410, found in Mus musculus (Mouse).